The sequence spans 216 residues: Elongation factor Ts (216 aa).

Residues 81–84 (TDFV) form an involved in Mg(2+) ion dislocation from EF-Tu region.

The protein belongs to the EF-Ts family.

It is found in the cytoplasm. Functionally, associates with the EF-Tu.GDP complex and induces the exchange of GDP to GTP. It remains bound to the aminoacyl-tRNA.EF-Tu.GTP complex up to the GTP hydrolysis stage on the ribosome. The chain is Elongation factor Ts from Geobacter metallireducens (strain ATCC 53774 / DSM 7210 / GS-15).